Consider the following 369-residue polypeptide: FAD-dependent monooxygenase FPY4 (369 aa).

The protein belongs to the aromatic-ring hydroxylase family. It depends on FAD as a cofactor.

It functions in the pathway secondary metabolite biosynthesis. Its function is as follows. FAD-dependent monooxygenase; part of the gene cluster that mediates the biosynthesis of the gamma-pyrones fusapyrone (FPY) and deoxyfusapyrone (dFPY). FPY is an undecaketide and thus likely synthesized by the polyketide synthase FPY1 from acetyl-CoA functioning as starter unit and the addition of 10 malonyl-CoA extender units by successive Claisen-condensations. Next to this, FPY shares some rare features: C-glycosylated 4-deoxyglucose at C-3, a gem-dimethyl group at C-13, and an alpha-beta to beta-gamma double bond shift at C-20. During FPY biosynthesis mono-C-methyl groups are transferred to the tetra-, penta-, hexa- and heptaketide, while two C-methyl groups are transferred to the nonaketide, suggesting that the CMet domain is programmed to selectively catalyze two successive C-alpha-methylation reactions of the nonaketide, while other alpha-carbons are non- or mono-methylated only. While the origin of the 4'-deoxyglucose moiety remains opaque, its transfer to C-3 is most likely mediated by the C-glycosyltransferase FPY2. Next to this, the hydroxyl group present at C-33 and discriminating between FPY and dFPY, is likely to be installed by the cytochrome P450 monooxygenase FPY7. No putative function can be predicted for the remaining genes FPY3-FPY6. The protein is FAD-dependent monooxygenase FPY4 of Fusarium mangiferae (Mango malformation disease fungus).